Consider the following 103-residue polypeptide: Large ribosomal subunit protein bL36m (103 aa).

Belongs to the bacterial ribosomal protein bL36 family. Component of the mitochondrial large ribosomal subunit (mt-LSU). Mature mammalian 55S mitochondrial ribosomes consist of a small (28S) and a large (39S) subunit. The 28S small subunit contains a 12S ribosomal RNA (12S mt-rRNA) and 30 different proteins. The 39S large subunit contains a 16S rRNA (16S mt-rRNA), a copy of mitochondrial valine transfer RNA (mt-tRNA(Val)), which plays an integral structural role, and 52 different proteins. bL36m has a zinc binding site.

The protein resides in the mitochondrion. This Homo sapiens (Human) protein is Large ribosomal subunit protein bL36m (MRPL36).